Here is a 158-residue protein sequence, read N- to C-terminus: Glutathione peroxidase homolog BsaA (158 aa).

C36 is a catalytic residue.

It belongs to the glutathione peroxidase family.

This is Glutathione peroxidase homolog BsaA (bsaA) from Staphylococcus epidermidis (strain ATCC 12228 / FDA PCI 1200).